A 367-amino-acid chain; its full sequence is Septin-1 (367 aa).

The Septin-type G domain occupies Lys22–Ser296. The G1 motif stretch occupies residues Gly32 to Ser39. GTP-binding positions include Gly32–Ser39, Thr66, Gly92, and Lys171–Glu179. The G3 motif stretch occupies residues Asp89–Gly92. Residues Gly170 to Asp173 are G4 motif. Ser206 is modified (phosphoserine). GTP is bound by residues Gly229 and Arg245. Ser248 is subject to Phosphoserine; by AURKB. Thr251 carries the phosphothreonine modification. Residues Ser307 and Ser315 each carry the phosphoserine; by AURKB modification.

Belongs to the TRAFAC class TrmE-Era-EngA-EngB-Septin-like GTPase superfamily. Septin GTPase family. In terms of assembly, septins polymerize into heterooligomeric protein complexes that form filaments, and can associate with cellular membranes, actin filaments and microtubules. GTPase activity is required for filament formation. Interacts with AURKB.

It localises to the cytoplasm. It is found in the cytoskeleton. The protein resides in the microtubule organizing center. The protein localises to the centrosome. Its subcellular location is the midbody. In terms of biological role, filament-forming cytoskeletal GTPase. May play a role in cytokinesis (Potential). The sequence is that of Septin-1 from Bos taurus (Bovine).